The sequence spans 303 residues: Flavin-dependent thymidylate synthase (303 aa).

Positions 1–21 (MALTSEQRAEIEAQRSEPQLT) are disordered. In terms of domain architecture, ThyX spans 43–256 (GFLRVVDYMG…PATAAAFEEY (214 aa)). Residues Thr-89, 112–114 (RHR), and Glu-120 contribute to the FAD site. DUMP is bound by residues 109 to 112 (QWIR), 120 to 124 (EYSAR), and Arg-195. The ThyX motif motif lies at 112–122 (RHRMASVNEYS). FAD is bound by residues 211-213 (DLH) and His-217. A dUMP-binding site is contributed by Arg-222. Arg-222 functions as the Involved in ionization of N3 of dUMP, leading to its activation in the catalytic mechanism.

This sequence belongs to the thymidylate synthase ThyX family. As to quaternary structure, homotetramer. The cofactor is FAD.

The enzyme catalyses dUMP + (6R)-5,10-methylene-5,6,7,8-tetrahydrofolate + NADPH + H(+) = dTMP + (6S)-5,6,7,8-tetrahydrofolate + NADP(+). The protein operates within pyrimidine metabolism; dTTP biosynthesis. Its function is as follows. Catalyzes the reductive methylation of 2'-deoxyuridine-5'-monophosphate (dUMP) to 2'-deoxythymidine-5'-monophosphate (dTMP) while utilizing 5,10-methylenetetrahydrofolate (mTHF) as the methyl donor, and NADPH and FADH(2) as the reductant. This Gluconobacter oxydans (strain 621H) (Gluconobacter suboxydans) protein is Flavin-dependent thymidylate synthase.